The primary structure comprises 473 residues: MKILYSQRRFYPVETLFNGTLALGGRDQETTGFAWWAGNARLINLSGKLLGAHVAHAGLIVFWAGAMNLFEVAHFVPEKPMYEQGLILLPHLATLGWGVGPGGEIVDTFPYFVSGVLHLISSAVLGFGGIYHALIGPETLEESFPFFGYVWKDKNKMTTILGIHLILLGAGAFLLVFKALYFGGIYDTWAPGGGDVRKITNLTLSPGVIFGYLLKSPFGGEGWIVSVDNLEDIIGGHVWLGSICIFGGIWHILTKPFAWARRALVWSGEAYLSYSLGAIAVFGFIACCFVWFNNTAYPSEFYGPTGPEASQAQAFTFLVRDQRLGANVGSAQGPTGLGKYIMRSPTGEIIFGGETMRFWDLRAPWLEPLRGPNGLDLSKLKKDIQPWQERRSAEYMTHAPLGSLNSVGGVATEINAVNYVSPRSWLATSHFVLGFFFFVGHLWHAGRARAAAAGFEKGIDRDFEPVLSMTPLN.

A propeptide spanning residues 1–14 is cleaved from the precursor; sequence MKILYSQRRFYPVE. At Thr15 the chain carries N-acetylthreonine. The residue at position 15 (Thr15) is a Phosphothreonine. The next 5 helical transmembrane spans lie at 69 to 93, 134 to 155, 178 to 200, 255 to 275, and 291 to 312; these read LFEV…PHLA, LIGP…KDKN, KALY…RKIT, KPFA…LSYS, and WFNN…ASQA. Glu367 contacts [CaMn4O5] cluster. The chain crosses the membrane as a helical span at residues 447-471; that stretch reads RARAAAAGFEKGIDRDFEPVLSMTP.

This sequence belongs to the PsbB/PsbC family. PsbC subfamily. PSII is composed of 1 copy each of membrane proteins PsbA, PsbB, PsbC, PsbD, PsbE, PsbF, PsbH, PsbI, PsbJ, PsbK, PsbL, PsbM, PsbT, PsbX, PsbY, PsbZ, Psb30/Ycf12, at least 3 peripheral proteins of the oxygen-evolving complex and a large number of cofactors. It forms dimeric complexes. Binds multiple chlorophylls and provides some of the ligands for the Ca-4Mn-5O cluster of the oxygen-evolving complex. It may also provide a ligand for a Cl- that is required for oxygen evolution. PSII binds additional chlorophylls, carotenoids and specific lipids. serves as cofactor. In terms of processing, phosphorylated on threonine residue(s).

The protein localises to the plastid. It localises to the chloroplast thylakoid membrane. One of the components of the core complex of photosystem II (PSII). It binds chlorophyll and helps catalyze the primary light-induced photochemical processes of PSII. PSII is a light-driven water:plastoquinone oxidoreductase, using light energy to abstract electrons from H(2)O, generating O(2) and a proton gradient subsequently used for ATP formation. The sequence is that of Photosystem II CP43 reaction center protein from Marchantia polymorpha (Common liverwort).